Here is a 574-residue protein sequence, read N- to C-terminus: MNQTRVFLIFAWLMVAALLWMEWGKEKAAANAPGAAATQSVPAARDLDAATPSAANVPAAQAIPQAGAPGKVPATSTTTATPAAAGTAPVVTLTSDVLRLKLDGRSVLDAELLQFPQTKDGTAPVSLLTEDAAHPYNATSGWASEHSPVPGVGGFRAEQPGTTFELAKGQNTLVVPFVWNGPNGVSIRRTFTLERGRYAISIKDEVINKSAAPWNGYVFRKLSRVPTILSRGMTNPDSFSFNGATWYSPQAGYERRAFKDYMDDGGLNRQITGGWIALLQHHFFTAWIPQNDQASLYVLNKDGPRDVAELRGPAFTVAPGQTATTEARLWVGPKLVSLIAKEDVKGLDRVIDYSRFSIMAIIGQGLFWVLSHLHSFLHNWGWAIVGLVVLLRLVLYPLSSAQYKSSAKMRKFQPRLAQLKERYGDDRVKYQQATMELFKKEKINPMGGCLPLLIQMPIFFALYWVLVESVELRQAPWLGWIQDLTARDPHFILPALNIAIMWATQKLTPTPGIDPMQAKMMQFMPLVFGAMMAFVPSGLVLYWVVNGGLNLLIQWWMIRQHGEKPSKIIRANAK.

The chain crosses the membrane as a helical span at residues Val-6–Glu-26. Residues Gln-65–Ala-85 form a disordered region. The next 5 helical transmembrane spans lie at Val-350 to Leu-370, Phe-376 to Tyr-396, Gly-447 to Val-467, Phe-491 to Pro-511, and Pro-525 to Val-545.

It belongs to the OXA1/ALB3/YidC family. Type 1 subfamily. In terms of assembly, interacts with the Sec translocase complex via SecD. Specifically interacts with transmembrane segments of nascent integral membrane proteins during membrane integration.

The protein resides in the cell inner membrane. Functionally, required for the insertion and/or proper folding and/or complex formation of integral membrane proteins into the membrane. Involved in integration of membrane proteins that insert both dependently and independently of the Sec translocase complex, as well as at least some lipoproteins. Aids folding of multispanning membrane proteins. In Xanthomonas oryzae pv. oryzae (strain PXO99A), this protein is Membrane protein insertase YidC.